The primary structure comprises 439 residues: Cysteine--tRNA ligase (439 aa).

Cys-26 provides a ligand contact to Zn(2+). Positions 28–38 (PTVYNHVHIGN) match the 'HIGH' region motif. Residues Cys-206, His-231, and Glu-235 each contribute to the Zn(2+) site. Residues 263-267 (KMSKS) carry the 'KMSKS' region motif. Lys-266 provides a ligand contact to ATP.

It belongs to the class-I aminoacyl-tRNA synthetase family. In terms of assembly, monomer. Zn(2+) is required as a cofactor.

It localises to the cytoplasm. It carries out the reaction tRNA(Cys) + L-cysteine + ATP = L-cysteinyl-tRNA(Cys) + AMP + diphosphate. The protein is Cysteine--tRNA ligase of Malacoplasma penetrans (strain HF-2) (Mycoplasma penetrans).